We begin with the raw amino-acid sequence, 219 residues long: Large ribosomal subunit protein uL1 (219 aa).

It belongs to the universal ribosomal protein uL1 family. Part of the 50S ribosomal subunit.

Binds directly to 23S rRNA. Probably involved in E site tRNA release. Functionally, protein L1 is also a translational repressor protein, it controls the translation of its operon by binding to its mRNA. The sequence is that of Large ribosomal subunit protein uL1 from Pyrococcus horikoshii (strain ATCC 700860 / DSM 12428 / JCM 9974 / NBRC 100139 / OT-3).